A 571-amino-acid chain; its full sequence is Minichromosome maintenance protein 10 (571 aa).

Thr17 is subject to Phosphothreonine. Ser18 carries the post-translational modification Phosphoserine. The segment at Cys309–His335 is zinc finger-like. The short motif at Lys435–Arg451 is the Bipartite nuclear localization signal element. 2 sufficient for nuclear localization regions span residues Lys435–Lys512 and Ser453–Gly553. The span at Arg451–Thr471 shows a compositional bias: basic and acidic residues. The segment at Arg451–Ser473 is disordered. Phosphoserine occurs at positions 453 and 454. Positions Lys512–Lys527 match the Bipartite nuclear localization signal motif. Basic and acidic residues predominate over residues Trp548–Ser561. The disordered stretch occupies residues Trp548–Ile571.

Belongs to the MCM10 family. Self-associates; assembles into large homomultimeric complexes of approximately 800 kDa. Associates with the MCM2-7 complex and the DNA polymerase alpha:primase complex. Interacts with ORC1, ORC2, MCM2, MCM3, CDC54/MCM4, MCM6, CDC47/MCM7, RFA2, CDC45, POL1, PRI2, POL12, SIR2 and SIR3. The diubiquitinated form interacts with POL30/PCNA C-terminus. In terms of processing, diubiquitinated in a cell cycle-regulated manner. Ubiquitination first appears in late G(1) and persists throughout S phase.

It is found in the nucleus. Its function is as follows. Required for DNA synthesis. Required for entry into or completion of S phase. Involved in DNA replication and seems to participate in the activation of the pre-replication complex (pre-RC) and in transcription elongation. May play a role as a key coordinator in assembling the replication fork. Proposed to function at replication origins following the binding of the MCM2-7 complex prior to the recruitment of CDC45. Probably is required to stimulate phosphorylation of the MCM2-7 complex by the CDC7-DBF4 kinase complex. May recruit the DNA polymerase alpha:primase complex to replication origins and is required to maintain it on chromatin independently of CDC45. May also play a role in transcriptional silencing. The sequence is that of Minichromosome maintenance protein 10 (MCM10) from Saccharomyces cerevisiae (strain ATCC 204508 / S288c) (Baker's yeast).